Consider the following 157-residue polypeptide: Small ribosomal subunit protein uS7 (157 aa).

Belongs to the universal ribosomal protein uS7 family. Part of the 30S ribosomal subunit. Contacts proteins S9 and S11.

Functionally, one of the primary rRNA binding proteins, it binds directly to 16S rRNA where it nucleates assembly of the head domain of the 30S subunit. Is located at the subunit interface close to the decoding center, probably blocks exit of the E-site tRNA. The protein is Small ribosomal subunit protein uS7 of Opitutus terrae (strain DSM 11246 / JCM 15787 / PB90-1).